The primary structure comprises 120 residues: NAD(P)H-quinone oxidoreductase subunit 3, chloroplastic (120 aa).

3 helical membrane-spanning segments follow: residues 9–29, 64–84, and 88–108; these read IFWAFLIISSAIPVLAFLISG, MFALVFVVFDVETVFLYPWAM, and VLGVSAFIEAFIFVLILILGL.

This sequence belongs to the complex I subunit 3 family. As to quaternary structure, NDH is composed of at least 16 different subunits, 5 of which are encoded in the nucleus.

Its subcellular location is the plastid. It is found in the chloroplast thylakoid membrane. The enzyme catalyses a plastoquinone + NADH + (n+1) H(+)(in) = a plastoquinol + NAD(+) + n H(+)(out). It carries out the reaction a plastoquinone + NADPH + (n+1) H(+)(in) = a plastoquinol + NADP(+) + n H(+)(out). NDH shuttles electrons from NAD(P)H:plastoquinone, via FMN and iron-sulfur (Fe-S) centers, to quinones in the photosynthetic chain and possibly in a chloroplast respiratory chain. The immediate electron acceptor for the enzyme in this species is believed to be plastoquinone. Couples the redox reaction to proton translocation, and thus conserves the redox energy in a proton gradient. In Lobularia maritima (Sweet alyssum), this protein is NAD(P)H-quinone oxidoreductase subunit 3, chloroplastic.